Reading from the N-terminus, the 1140-residue chain is Condensin-2 complex subunit G2 (1140 aa).

The HEAT repeat unit spans residues 460-493 (LLPALKSSLHDSSEKVRVAFVGMLLKIKAARAAK).

In terms of assembly, component of the condensin-2 complex, which contains the smc2 and smc4 heterodimer, and three non SMC subunits that probably regulate the complex: ncaph2, ncapd3 and ncapg2.

It is found in the nucleus. Regulatory subunit of the condensin-2 complex, a complex which establishes mitotic chromosome architecture and is involved in physical rigidity of the chromatid axis. Plays a role in the embryonic development of the head and kidney structures. The chain is Condensin-2 complex subunit G2 from Danio rerio (Zebrafish).